The sequence spans 236 residues: Eukaryotic translation initiation factor 3 subunit J (236 aa).

The interval 1–86 (MADDWESAAD…KEEEEQKRLA (86 aa)) is disordered. A compositionally biased stretch (acidic residues) spans 28–46 (GEDDDEDVKESWEDEEEKK). 2 stretches are compositionally biased toward basic and acidic residues: residues 47-58 (DEEKPTKTEAPV) and 68-86 (AKLEEQERLKEEEEQKRLA). A coiled-coil region spans residues 61–115 (KPNKALKAKLEEQERLKEEEEQKRLAEMTPEEKLAEKLRLQKIQEESDLKSALET).

The protein belongs to the eIF-3 subunit J family. Component of the eukaryotic translation initiation factor 3 (eIF-3) complex. The eIF-3 complex interacts with pix.

It localises to the cytoplasm. In terms of biological role, component of the eukaryotic translation initiation factor 3 (eIF-3) complex, which is involved in protein synthesis of a specialized repertoire of mRNAs and, together with other initiation factors, stimulates binding of mRNA and methionyl-tRNAi to the 40S ribosome. The eIF-3 complex specifically targets and initiates translation of a subset of mRNAs involved in cell proliferation. The sequence is that of Eukaryotic translation initiation factor 3 subunit J from Drosophila mojavensis (Fruit fly).